Here is a 124-residue protein sequence, read N- to C-terminus: Schlafen-like protein (124 aa).

This sequence belongs to the Schlafen family. Subgroup poxviridae B3 subfamily.

This Homo sapiens (Human) protein is Schlafen-like protein.